Reading from the N-terminus, the 154-residue chain is MAARMCCKLDPARDVLCLRPIGAESRGRPLPGPLGAVPPSSPSAVPADDGSHLSLRGLPVCSFSSAGPCALRFTSARRMETTVNAPWSLPTVLHKRTLGLSGWSMTWIEEYIKDCVFKDWEELGEEIRLKVFVLGGCRHKLVCSPAPCNFFTSA.

The segment at 28–50 (RPLPGPLGAVPPSSPSAVPADDG) is disordered. The segment covering 33–48 (PLGAVPPSSPSAVPAD) has biased composition (low complexity). Positions 68 to 117 (PCALRFTSARRMETTVNAPWSLPTVLHKRTLGLSGWSMTWIEEYIKDCVF) are mitochondrial targeting sequence.

This sequence belongs to the orthohepadnavirus protein X family. In terms of assembly, may form homodimer. May interact with host CEBPA, CFLAR, CREB1, DDB1, E4F1, HBXIP, HSPD1/HSP60, NFKBIA, POLR2E and SMAD4. Interacts with host SMC5-SMC6 complex and induces its degradation. Interacts with host TRPC4AP; leading to prevent ubiquitination of TRPC4AP. Interacts with host PLSCR1; this interaction promotes ubiquitination and degradation of HBx and impairs HBx-mediated cell proliferation. In terms of processing, a fraction may be phosphorylated in insect cells and HepG2 cells, a human hepatoblastoma cell line. Phosphorylated in vitro by host protein kinase C or mitogen-activated protein kinase. N-acetylated in insect cells.

The protein resides in the host cytoplasm. It localises to the host nucleus. The protein localises to the host mitochondrion. Its function is as follows. Multifunctional protein that plays a role in silencing host antiviral defenses and promoting viral transcription. Does not seem to be essential for HBV infection. May be directly involved in development of cirrhosis and liver cancer (hepatocellular carcinoma). Most of cytosolic activities involve modulation of cytosolic calcium. The effect on apoptosis is controversial depending on the cell types in which the studies have been conducted. May induce apoptosis by localizing in mitochondria and causing loss of mitochondrial membrane potential. May also modulate apoptosis by binding host CFLAR, a key regulator of the death-inducing signaling complex (DISC). Promotes viral transcription by using the host E3 ubiquitin ligase DDB1 to target the SMC5-SMC6 complex to proteasomal degradation. This host complex would otherwise bind to viral episomal DNA, and prevents its transcription. Moderately stimulates transcription of many different viral and cellular transcription elements. Promoters and enhancers stimulated by HBx contain DNA binding sites for NF-kappa-B, AP-1, AP-2, c-EBP, ATF/CREB, or the calcium-activated factor NF-AT. The polypeptide is Protein X (Homo sapiens (Human)).